The sequence spans 501 residues: FKLASRRRLYNARVLQADNIGDKQRNPDVDAARQNTQIVVVGAGLPGLSAAQHLLYNGFRRTVILEATDRYGGRINTQRFGDTYCELGAKWVKIDGSQDSMYELLRNTEGLDKQIKQPDRATYLQDGSHINPAMVELIDTLFRQLCRGFKVSERVKTGGDLHSLDNVMNYFRTESDRIIGTSFQQPKDQLAAREIFQSLFKEFGSILGCCLEYVNIEHITKCPVQQELRPLYVPTGLDNVVDDLIQNMDKAQLQTGKPVGQIQWTPAPMKSVGCLDGSLYNADHIICTLPLGVLKSFAGVLFRPTLPLDKMLAIRNLGFGNPLKIYLSYKKPIGRWLKGSLRPLGTLLNPSAEQQPERNWTQQVVEISQVPSSQHVLEVHVGGGYYEEIEKLPDDELLEQITGLLRRCVSNNLVPYPQELLRSNWSTSACYLGGRPYFSTINSARDVQRLAAPLGEKSPGLLFAGDATSLNGFGTIDAARSSGIREAQRIIDFYLKRAHFG.

It is found in the cytoplasm. Functionally, has a non-vital function. This is Protein anon-37Cs (anon-37Cs) from Drosophila simulans (Fruit fly).